We begin with the raw amino-acid sequence, 141 residues long: Protein X (141 aa).

The segment at 25–52 (SSGPSFPRPAAGSAASSASSPSPSDDSD) is disordered. Positions 68-113 (PCCLVFTCADLRTMDSTVNFVSWHANRQLGMPSKDLWTPYIKDQLL) are mitochondrial targeting sequence.

It belongs to the orthohepadnavirus protein X family. As to quaternary structure, may form homodimer. May interact with host CEBPA, CFLAR, CREB1, DDB1, E4F1, HBXIP, HSPD1/HSP60, NFKBIA, POLR2E and SMAD4. Interacts with host SMC5-SMC6 complex and induces its degradation. Interacts with host TRPC4AP; leading to prevent ubiquitination of TRPC4AP. Interacts with host PLSCR1; this interaction promotes ubiquitination and degradation of HBx and impairs HBx-mediated cell proliferation. In terms of processing, a fraction may be phosphorylated in insect cells and HepG2 cells, a human hepatoblastoma cell line. Phosphorylated in vitro by host protein kinase C or mitogen-activated protein kinase. N-acetylated in insect cells.

The protein localises to the host cytoplasm. It is found in the host nucleus. Its subcellular location is the host mitochondrion. Functionally, multifunctional protein that plays a role in silencing host antiviral defenses and promoting viral transcription. Does not seem to be essential for HBV infection. May be directly involved in development of cirrhosis and liver cancer (hepatocellular carcinoma). Most of cytosolic activities involve modulation of cytosolic calcium. The effect on apoptosis is controversial depending on the cell types in which the studies have been conducted. May induce apoptosis by localizing in mitochondria and causing loss of mitochondrial membrane potential. May also modulate apoptosis by binding host CFLAR, a key regulator of the death-inducing signaling complex (DISC). Promotes viral transcription by using the host E3 ubiquitin ligase DDB1 to target the SMC5-SMC6 complex to proteasomal degradation. This host complex would otherwise bind to viral episomal DNA, and prevents its transcription. Moderately stimulates transcription of many different viral and cellular transcription elements. Promoters and enhancers stimulated by HBx contain DNA binding sites for NF-kappa-B, AP-1, AP-2, c-EBP, ATF/CREB, or the calcium-activated factor NF-AT. This Woodchuck hepatitis B virus (isolate 2) (WHV) protein is Protein X.